The following is a 107-amino-acid chain: Phosphoribosyl-ATP pyrophosphatase 1 (107 aa).

Belongs to the PRA-PH family.

The protein resides in the cytoplasm. The catalysed reaction is 1-(5-phospho-beta-D-ribosyl)-ATP + H2O = 1-(5-phospho-beta-D-ribosyl)-5'-AMP + diphosphate + H(+). The protein operates within amino-acid biosynthesis; L-histidine biosynthesis; L-histidine from 5-phospho-alpha-D-ribose 1-diphosphate: step 2/9. This is Phosphoribosyl-ATP pyrophosphatase 1 (hisE1) from Rhodopseudomonas palustris (strain ATCC BAA-98 / CGA009).